The following is a 495-amino-acid chain: MANILSLETLLISWLSSFILMFFILKWVSFYSKTKKNLPPSPQKLPIIGNFHQLGPNPHRSLQALSEKHGPIMLLHLGSVPMLVASNSEVAQEIMKTHDVSFASRPNSPILNILLYGCKDIAFAPSGEYWRQLKSIIVSNLLSSTQVKSFKNVREKEIGHMIGVIGESYGSSVDMSALLVSLAENVICTVALGRKFDGLKLTSLLRRYLSMFNLFSVGSYIPWLSWVDQLSGLTGRATKVVKEFDEFLEVIIEDHANAKINGGKDFIDMLLNAQQDQTTGFAFQRDTIKAVIFDIFGGGIDSVSTSIDWVMSELVKHPNVMKKLQKEVTEISQGRSMVAEEDLEKMQYLKAVIKESWRLHPPVPLLIPRKSTNDVKLMGYDIQAGTQVMVNVWQIGRDPTLWDEPNEFRPERFSKGSVNYSGLNFEWLPFGVGRRACPGTQFGAAVIELAIANIVYKFDLALPNGVKHEDLDMSEKYGITVHRKNPLLVTASPRF.

2 consecutive transmembrane segments (helical) span residues 4–24 (ILSLETLLISWLSSFILMFFI) and 208–228 (YLSMFNLFSVGSYIPWLSWVD). Asn419 carries N-linked (GlcNAc...) asparagine glycosylation. Cys437 contacts heme.

This sequence belongs to the cytochrome P450 family. Requires heme as cofactor.

Its subcellular location is the membrane. Its pathway is secondary metabolite biosynthesis; terpenoid biosynthesis. Probably involved in the biosynthesis of germacrene-derived sesquiterpene lactones. This Tanacetum parthenium (Feverfew) protein is Cytochrome P450 Tp4149.